Here is a 137-residue protein sequence, read N- to C-terminus: Protein MGF 110-7L (137 aa).

An N-terminal signal peptide occupies residues 1–20 (MLVIILGIIGLLASSNLVSS). Residues Asn-69, Asn-70, and Asn-105 are each glycosylated (N-linked (GlcNAc...) asparagine; by host).

It belongs to the asfivirus MGF 110 family.

Plays a role in virus cell tropism, and may be required for efficient virus replication in macrophages. This is Protein MGF 110-7L from African swine fever virus (isolate Warthog/Namibia/Wart80/1980) (ASFV).